The primary structure comprises 252 residues: Uridylate kinase (252 aa).

23-26 (KLSG) is a binding site for ATP. G65 is a binding site for UMP. 2 residues coordinate ATP: G66 and R70. Residues D85 and 146-153 (LGAPFFST) each bind UMP. ATP contacts are provided by T173, Q174, Y179, and D182.

It belongs to the UMP kinase family. As to quaternary structure, homohexamer.

It is found in the cytoplasm. The catalysed reaction is UMP + ATP = UDP + ADP. It participates in pyrimidine metabolism; CTP biosynthesis via de novo pathway; UDP from UMP (UMPK route): step 1/1. Its activity is regulated as follows. Inhibited by UTP. Functionally, catalyzes the reversible phosphorylation of UMP to UDP. This chain is Uridylate kinase, found in Thermobifida fusca (strain YX).